We begin with the raw amino-acid sequence, 505 residues long: ATP synthase subunit alpha (505 aa).

Residue 170–177 (GDRQTGKS) participates in ATP binding.

It belongs to the ATPase alpha/beta chains family. As to quaternary structure, F-type ATPases have 2 components, CF(1) - the catalytic core - and CF(0) - the membrane proton channel. CF(1) has five subunits: alpha(3), beta(3), gamma(1), delta(1), epsilon(1). CF(0) has four main subunits: a(1), b(1), b'(1) and c(9-12).

It localises to the cellular thylakoid membrane. It carries out the reaction ATP + H2O + 4 H(+)(in) = ADP + phosphate + 5 H(+)(out). Its function is as follows. Produces ATP from ADP in the presence of a proton gradient across the membrane. The alpha chain is a regulatory subunit. This chain is ATP synthase subunit alpha, found in Prochlorococcus marinus (strain AS9601).